A 148-amino-acid chain; its full sequence is IQ domain-containing protein F5 (148 aa).

2 IQ domains span residues 11–40 (ERSA…RAWI) and 67–96 (QEWA…AVRI).

The protein is IQ domain-containing protein F5 (IQCF5) of Homo sapiens (Human).